The chain runs to 319 residues: Acetyl-coenzyme A carboxylase carboxyl transferase subunit alpha (319 aa).

In terms of domain architecture, CoA carboxyltransferase C-terminal spans 32-293 (NVDIEVRALE…KAVLLNELEA (262 aa)).

This sequence belongs to the AccA family. As to quaternary structure, acetyl-CoA carboxylase is a heterohexamer composed of biotin carboxyl carrier protein (AccB), biotin carboxylase (AccC) and two subunits each of ACCase subunit alpha (AccA) and ACCase subunit beta (AccD).

The protein localises to the cytoplasm. The catalysed reaction is N(6)-carboxybiotinyl-L-lysyl-[protein] + acetyl-CoA = N(6)-biotinyl-L-lysyl-[protein] + malonyl-CoA. It functions in the pathway lipid metabolism; malonyl-CoA biosynthesis; malonyl-CoA from acetyl-CoA: step 1/1. Its function is as follows. Component of the acetyl coenzyme A carboxylase (ACC) complex. First, biotin carboxylase catalyzes the carboxylation of biotin on its carrier protein (BCCP) and then the CO(2) group is transferred by the carboxyltransferase to acetyl-CoA to form malonyl-CoA. The polypeptide is Acetyl-coenzyme A carboxylase carboxyl transferase subunit alpha (Xylella fastidiosa (strain Temecula1 / ATCC 700964)).